A 560-amino-acid chain; its full sequence is MFS siderochrome iron transporter 1 (560 aa).

Residue N29 is glycosylated (N-linked (GlcNAc...) asparagine). A run of 11 helical transmembrane segments spans residues 53-73 (LWLT…LVSV), 90-110 (LLAS…LTLA), 115-135 (VWGR…ALIM), 146-166 (VAAH…VDVM), 177-194 (MIMF…TFAG), 211-231 (FGAF…IMLF), 264-284 (VVGI…FSIV), 291-311 (WATG…AIFL), 331-351 (PTII…LLTI), 354-374 (AGYV…GIGL), and 379-399 (FKWA…LLIP). N-linked (GlcNAc...) asparagine glycosylation occurs at N404. A run of 3 helical transmembrane segments spans residues 407–427 (IGAV…FSVC), 441–461 (VAVV…VGLA), and 522–542 (VIAG…WRNV).

Belongs to the major facilitator superfamily.

The protein localises to the membrane. Functionally, major facilitator transporter involved in siderophore transport. The sequence is that of MFS siderochrome iron transporter 1 from Ajellomyces capsulatus (Darling's disease fungus).